Reading from the N-terminus, the 84-residue chain is Cytochrome c oxidase subunit 12, mitochondrial (84 aa).

One can recognise a CHCH domain in the interval 27–70 (TKHCWQNYVDYHKCILAKGEDFAPCRQFWLAYRSLCPSGWYQRW). The Cx9C motif signature appears at 30 to 40 (CWQNYVDYHKC). 2 disulfide bridges follow: Cys-30/Cys-62 and Cys-40/Cys-51. A Cx10C motif motif is present at residues 51–62 (CRQFWLAYRSLC).

The protein belongs to the cytochrome c oxidase subunit 6B family. Component of the cytochrome c oxidase (complex IV, CIV), a multisubunit enzyme composed of 11 subunits. The complex is composed of a catalytic core of 3 subunits Cox1, Cox2 and Cox3, encoded in the mitochondrial DNA, and 8 supernumerary subunits Cox4, Cox5a/Cox5, Cox6, Cox7, Cox8, Cox7a/Cox9, Cox6b/Cox12 and Cox6a/Cox13, which are encoded in the nuclear genome. The complex exists as a monomer or a dimer and forms respiratory supercomplexes (SCs) in the inner mitochondrial membrane with NADH-ubiquinone oxidoreductase (complex I, CI) and ubiquinol-cytochrome c oxidoreductase (cytochrome b-c1 complex, complex III, CIII), resulting in various different assemblies (supercomplexes I(1)IV(1), I(1)III(3)IV(2), III(2)IV(1) and III(2)IV(2) as well as larger supercomplexes of compositions like I(1)III(2)IV(5-6)).

It is found in the mitochondrion inner membrane. The protein operates within energy metabolism; oxidative phosphorylation. Its function is as follows. Component of the cytochrome c oxidase, the last enzyme in the mitochondrial electron transport chain which drives oxidative phosphorylation. The respiratory chain contains 3 multisubunit complexes succinate dehydrogenase (complex II, CII), ubiquinol-cytochrome c oxidoreductase (cytochrome b-c1 complex, complex III, CIII) and cytochrome c oxidase (complex IV, CIV), that cooperate to transfer electrons derived from NADH and succinate to molecular oxygen, creating an electrochemical gradient over the inner membrane that drives transmembrane transport and the ATP synthase. Cytochrome c oxidase is the component of the respiratory chain that catalyzes the reduction of oxygen to water. Electrons originating from reduced cytochrome c in the intermembrane space (IMS) are transferred via the dinuclear copper A center (CU(A)) of Cox2 and heme A of Cox1 to the active site in Cox1, a binuclear center (BNC) formed by heme A3 and copper B (CU(B)). The BNC reduces molecular oxygen to 2 water molecules using 4 electrons from cytochrome c in the IMS and 4 protons from the mitochondrial matrix. In Neurospora crassa (strain ATCC 24698 / 74-OR23-1A / CBS 708.71 / DSM 1257 / FGSC 987), this protein is Cytochrome c oxidase subunit 12, mitochondrial (cox-13).